The following is a 277-amino-acid chain: Ribosomal RNA small subunit methyltransferase A (277 aa).

The S-adenosyl-L-methionine site is built by His-15, Leu-17, Gly-42, Glu-64, Asp-89, and Asn-109.

It belongs to the class I-like SAM-binding methyltransferase superfamily. rRNA adenine N(6)-methyltransferase family. RsmA subfamily.

It is found in the cytoplasm. The catalysed reaction is adenosine(1518)/adenosine(1519) in 16S rRNA + 4 S-adenosyl-L-methionine = N(6)-dimethyladenosine(1518)/N(6)-dimethyladenosine(1519) in 16S rRNA + 4 S-adenosyl-L-homocysteine + 4 H(+). Specifically dimethylates two adjacent adenosines (A1518 and A1519) in the loop of a conserved hairpin near the 3'-end of 16S rRNA in the 30S particle. May play a critical role in biogenesis of 30S subunits. The polypeptide is Ribosomal RNA small subunit methyltransferase A (Synechococcus sp. (strain CC9311)).